A 321-amino-acid chain; its full sequence is Lipoyl synthase (321 aa).

The [4Fe-4S] cluster site is built by C68, C73, C79, C94, C98, C101, and S308. One can recognise a Radical SAM core domain in the interval 80–297 (FNHGTATFMI…RVFAEEIGFT (218 aa)).

It belongs to the radical SAM superfamily. Lipoyl synthase family. [4Fe-4S] cluster is required as a cofactor.

The protein localises to the cytoplasm. It catalyses the reaction [[Fe-S] cluster scaffold protein carrying a second [4Fe-4S](2+) cluster] + N(6)-octanoyl-L-lysyl-[protein] + 2 oxidized [2Fe-2S]-[ferredoxin] + 2 S-adenosyl-L-methionine + 4 H(+) = [[Fe-S] cluster scaffold protein] + N(6)-[(R)-dihydrolipoyl]-L-lysyl-[protein] + 4 Fe(3+) + 2 hydrogen sulfide + 2 5'-deoxyadenosine + 2 L-methionine + 2 reduced [2Fe-2S]-[ferredoxin]. It participates in protein modification; protein lipoylation via endogenous pathway; protein N(6)-(lipoyl)lysine from octanoyl-[acyl-carrier-protein]: step 2/2. In terms of biological role, catalyzes the radical-mediated insertion of two sulfur atoms into the C-6 and C-8 positions of the octanoyl moiety bound to the lipoyl domains of lipoate-dependent enzymes, thereby converting the octanoylated domains into lipoylated derivatives. This is Lipoyl synthase from Shewanella woodyi (strain ATCC 51908 / MS32).